Consider the following 1083-residue polypeptide: Kinesin-like protein klp-19 (1083 aa).

Positions 6 to 328 constitute a Kinesin motor domain; the sequence is SLRVVVRARP…LRYADRAKQI (323 aa). Residue 85–92 coordinates ATP; that stretch reads GQTGSGKT. A coiled-coil region spans residues 408–435; it reads MSALTQKNSRLEEDKAKLQSMLTDVRNT. Positions 458 to 471 are enriched in acidic residues; it reads TEESTTLADDDNDE. The tract at residues 458–479 is disordered; sequence TEESTTLADDDNDETALGGQDD. Residues 487-650 adopt a coiled-coil conformation; it reads LPELQAELDD…KSKLQKREND (164 aa). Positions 1044-1055 are enriched in polar residues; the sequence is DDSQPSPSNSTF. Residues 1044–1083 form a disordered region; that stretch reads DDSQPSPSNSTFVIGAAPTSEADGVPPIKRKSRRTDLGPL.

Belongs to the TRAFAC class myosin-kinesin ATPase superfamily. Kinesin family. As to expression, expressed in the gonad.

It is found in the nucleus. The protein resides in the nucleoplasm. The protein localises to the cytoplasm. It localises to the cytoskeleton. Its subcellular location is the spindle. It is found in the chromosome. Its function is as follows. Required for chromosome movement and orientation on spindle poles in mitosis and meiosis. May play a role in early anterior-posterior chromosome movement in mitotic embryos. The sequence is that of Kinesin-like protein klp-19 from Caenorhabditis elegans.